Reading from the N-terminus, the 251-residue chain is Triosephosphate isomerase (251 aa).

9–11 (NWK) is a substrate binding site. The active-site Electrophile is H96. The active-site Proton acceptor is E168. Substrate-binding positions include G174, S214, and 235 to 236 (GG).

This sequence belongs to the triosephosphate isomerase family. As to quaternary structure, homodimer.

The protein localises to the cytoplasm. It catalyses the reaction D-glyceraldehyde 3-phosphate = dihydroxyacetone phosphate. Its pathway is carbohydrate biosynthesis; gluconeogenesis. It participates in carbohydrate degradation; glycolysis; D-glyceraldehyde 3-phosphate from glycerone phosphate: step 1/1. Involved in the gluconeogenesis. Catalyzes stereospecifically the conversion of dihydroxyacetone phosphate (DHAP) to D-glyceraldehyde-3-phosphate (G3P). This Cytophaga hutchinsonii (strain ATCC 33406 / DSM 1761 / CIP 103989 / NBRC 15051 / NCIMB 9469 / D465) protein is Triosephosphate isomerase.